Here is a 449-residue protein sequence, read N- to C-terminus: Glucose-6-phosphate isomerase (449 aa).

Glutamate 291 functions as the Proton donor in the catalytic mechanism. Catalysis depends on residues histidine 312 and lysine 426.

The protein belongs to the GPI family.

The protein resides in the cytoplasm. The enzyme catalyses alpha-D-glucose 6-phosphate = beta-D-fructose 6-phosphate. The protein operates within carbohydrate biosynthesis; gluconeogenesis. It functions in the pathway carbohydrate degradation; glycolysis; D-glyceraldehyde 3-phosphate and glycerone phosphate from D-glucose: step 2/4. Its function is as follows. Catalyzes the reversible isomerization of glucose-6-phosphate to fructose-6-phosphate. This is Glucose-6-phosphate isomerase from Streptococcus pneumoniae serotype 19F (strain G54).